We begin with the raw amino-acid sequence, 390 residues long: 3-ketoacyl-CoA thiolase (390 aa).

Cys95 functions as the Acyl-thioester intermediate in the catalytic mechanism. Residues His346 and Cys376 each act as proton acceptor in the active site.

It belongs to the thiolase-like superfamily. Thiolase family. Heterotetramer of two alpha chains (FadB) and two beta chains (FadA).

The protein resides in the cytoplasm. It carries out the reaction an acyl-CoA + acetyl-CoA = a 3-oxoacyl-CoA + CoA. Its pathway is lipid metabolism; fatty acid beta-oxidation. Catalyzes the final step of fatty acid oxidation in which acetyl-CoA is released and the CoA ester of a fatty acid two carbons shorter is formed. In Psychrobacter cryohalolentis (strain ATCC BAA-1226 / DSM 17306 / VKM B-2378 / K5), this protein is 3-ketoacyl-CoA thiolase.